We begin with the raw amino-acid sequence, 142 residues long: Large ribosomal subunit protein uL11 (142 aa).

The protein belongs to the universal ribosomal protein uL11 family. In terms of assembly, part of the ribosomal stalk of the 50S ribosomal subunit. Interacts with L10 and the large rRNA to form the base of the stalk. L10 forms an elongated spine to which L12 dimers bind in a sequential fashion forming a multimeric L10(L12)X complex. In terms of processing, one or more lysine residues are methylated.

Forms part of the ribosomal stalk which helps the ribosome interact with GTP-bound translation factors. The protein is Large ribosomal subunit protein uL11 of Xylella fastidiosa (strain Temecula1 / ATCC 700964).